We begin with the raw amino-acid sequence, 85 residues long: Putative membrane protein insertion efficiency factor (85 aa).

The tract at residues 62–85 (PLGSDGYDPVPEPKDRKPPHSPAG) is disordered.

Belongs to the UPF0161 family.

The protein localises to the cell inner membrane. Could be involved in insertion of integral membrane proteins into the membrane. This chain is Putative membrane protein insertion efficiency factor, found in Ruegeria pomeroyi (strain ATCC 700808 / DSM 15171 / DSS-3) (Silicibacter pomeroyi).